The primary structure comprises 244 residues: 6-carboxyhexanoate--CoA ligase (244 aa).

Belongs to the BioW family. Homodimer. The cofactor is Mg(2+).

The enzyme catalyses heptanedioate + ATP + CoA = 6-carboxyhexanoyl-CoA + AMP + diphosphate. Its pathway is metabolic intermediate metabolism; pimeloyl-CoA biosynthesis; pimeloyl-CoA from pimelate: step 1/1. Functionally, catalyzes the transformation of pimelate into pimeloyl-CoA with concomitant hydrolysis of ATP to AMP. The protein is 6-carboxyhexanoate--CoA ligase of Methanococcus maripaludis (strain C6 / ATCC BAA-1332).